A 92-amino-acid polypeptide reads, in one-letter code: Small ribosomal subunit protein uS19 (92 aa).

It belongs to the universal ribosomal protein uS19 family.

Functionally, protein S19 forms a complex with S13 that binds strongly to the 16S ribosomal RNA. This Nitrobacter winogradskyi (strain ATCC 25391 / DSM 10237 / CIP 104748 / NCIMB 11846 / Nb-255) protein is Small ribosomal subunit protein uS19.